A 285-amino-acid chain; its full sequence is Acetyl-coenzyme A carboxylase carboxyl transferase subunit beta (285 aa).

One can recognise a CoA carboxyltransferase N-terminal domain in the interval Ile29–Lys285. Zn(2+)-binding residues include Cys33, Cys36, Cys52, and Cys55. A C4-type zinc finger spans residues Cys33–Cys55.

This sequence belongs to the AccD/PCCB family. Acetyl-CoA carboxylase is a heterohexamer composed of biotin carboxyl carrier protein (AccB), biotin carboxylase (AccC) and two subunits each of ACCase subunit alpha (AccA) and ACCase subunit beta (AccD). Requires Zn(2+) as cofactor.

It localises to the cytoplasm. It catalyses the reaction N(6)-carboxybiotinyl-L-lysyl-[protein] + acetyl-CoA = N(6)-biotinyl-L-lysyl-[protein] + malonyl-CoA. Its pathway is lipid metabolism; malonyl-CoA biosynthesis; malonyl-CoA from acetyl-CoA: step 1/1. In terms of biological role, component of the acetyl coenzyme A carboxylase (ACC) complex. Biotin carboxylase (BC) catalyzes the carboxylation of biotin on its carrier protein (BCCP) and then the CO(2) group is transferred by the transcarboxylase to acetyl-CoA to form malonyl-CoA. The protein is Acetyl-coenzyme A carboxylase carboxyl transferase subunit beta of Staphylococcus aureus (strain Newman).